The following is a 415-amino-acid chain: Gamma-glutamyl phosphate reductase (415 aa).

Belongs to the gamma-glutamyl phosphate reductase family.

The protein localises to the cytoplasm. The enzyme catalyses L-glutamate 5-semialdehyde + phosphate + NADP(+) = L-glutamyl 5-phosphate + NADPH + H(+). It functions in the pathway amino-acid biosynthesis; L-proline biosynthesis; L-glutamate 5-semialdehyde from L-glutamate: step 2/2. Functionally, catalyzes the NADPH-dependent reduction of L-glutamate 5-phosphate into L-glutamate 5-semialdehyde and phosphate. The product spontaneously undergoes cyclization to form 1-pyrroline-5-carboxylate. The sequence is that of Gamma-glutamyl phosphate reductase from Carboxydothermus hydrogenoformans (strain ATCC BAA-161 / DSM 6008 / Z-2901).